A 203-amino-acid polypeptide reads, in one-letter code: Putative archaetidylserine decarboxylase proenzyme (203 aa).

The active-site Schiff-base intermediate with substrate; via pyruvic acid is the Ser171. Ser171 is subject to Pyruvic acid (Ser); by autocatalysis.

Belongs to the phosphatidylserine decarboxylase family. PSD-A subfamily. Heterodimer of a large membrane-associated beta subunit and a small pyruvoyl-containing alpha subunit. It depends on pyruvate as a cofactor. In terms of processing, is synthesized initially as an inactive proenzyme. Formation of the active enzyme involves a self-maturation process in which the active site pyruvoyl group is generated from an internal serine residue via an autocatalytic post-translational modification. Two non-identical subunits are generated from the proenzyme in this reaction, and the pyruvate is formed at the N-terminus of the alpha chain, which is derived from the carboxyl end of the proenzyme. The post-translation cleavage follows an unusual pathway, termed non-hydrolytic serinolysis, in which the side chain hydroxyl group of the serine supplies its oxygen atom to form the C-terminus of the beta chain, while the remainder of the serine residue undergoes an oxidative deamination to produce ammonia and the pyruvoyl prosthetic group on the alpha chain.

The protein resides in the cell membrane. The enzyme catalyses archaetidylserine + H(+) = archaetidylethanolamine + CO2. Functionally, catalyzes the formation of archaetidylethanolamine (PtdEtn) from archaetidylserine (PtdSer). The chain is Putative archaetidylserine decarboxylase proenzyme from Methanosarcina barkeri (strain Fusaro / DSM 804).